The chain runs to 1501 residues: RE1-silencing transcription factor A (1501 aa).

A C2H2-type 1 zinc finger spans residues 158–180 (FRCKPCQYKAESEEEFVHHIKIH). Residues 186–200 (VDNDSKKNPQGKEAD) are compositionally biased toward basic and acidic residues. The segment at 186–209 (VDNDSKKNPQGKEADSSIPEESDI) is disordered. 7 consecutive C2H2-type zinc fingers follow at residues 214-236 (IQCDGCGYNTNRFDHYLAHLKHH), 246-268 (YKCTICTYSTVSEYHWKKHLRNH), 274-296 (YTCSQCSYFSDRKNNYIQHIRTH), 302-324 (YQCIICLYSSSQKTHLTRHMRTH), 330-353 (FKCEQCSYVASNQHEVTRHARQVH), 359-381 (LTCPHCDYKTADRSNFKKHVELH), and 387-410 (FLCPVCDYAASKKCNLQYHIKSRH). Disordered stretches follow at residues 491-514 (SSTQKKIKASEVRPEKIVDKSRKS), 569-612 (SFVK…SVAS), 885-929 (PTKV…VPGD), and 1040-1079 (VAAGDEPTSVQPLSREDPKSVQPIGEDQPTSVQPPGGDEQ). 2 stretches are compositionally biased toward basic and acidic residues: residues 498–512 (KASEVRPEKIVDKSR) and 594–605 (ITEKKEKGKQLD). Polar residues predominate over residues 1067 to 1079 (QPTSVQPPGGDEQ). The segment at 1463–1485 (FVCIFCDRTFRKEEEYTKHLRRH) adopts a C2H2-type 9 zinc-finger fold.

It localises to the nucleus. It is found in the cytoplasm. Transcriptional repressor which binds neuron-restrictive silencer element (NRSE) and represses neuronal gene transcription in non-neuronal cells. Plays a role in the early development of the nervous system and is required for proper patterning of the neuroectoderm during gastrulation. This involves the correct speciation of the neuroepithelial domain and adequate development of the non-neural ectoderm. This Xenopus laevis (African clawed frog) protein is RE1-silencing transcription factor A (rest-a).